A 422-amino-acid chain; its full sequence is Synaptotagmin-1 (422 aa).

Residues Met1 to Pro57 lie on the Vesicular side of the membrane. Asn25 carries N-linked (GlcNAc...) asparagine glycosylation. Residues Pro58–Cys80 form a helical membrane-spanning segment. Residues Cys75, Cys76, Cys78, Cys80, and Cys83 are each lipidated (S-palmitoyl cysteine). At Lys81–Lys422 the chain is on the cytoplasmic side. A disordered region spans residues Thr113–Lys142. Residues Asp122–Lys134 are compositionally biased toward acidic residues. Thr129 carries the phosphothreonine modification. Positions Glu136–Asn382 are phospholipid binding. Residues Lys142–Arg261 enclose the C2 1 domain. The Ca(2+) site is built by Leu172, Asp173, and Asp179. A Phosphotyrosine modification is found at Tyr230. Ca(2+)-binding residues include Asp231, Phe232, Asp233, Ser236, Lys237, and Asp239. Position 265 is a phosphoserine (Ser265). The region spanning Lys273–His406 is the C2 2 domain. 2 residues coordinate Ca(2+): Asp304 and Asp310. A phosphoserine mark is found at Ser343 and Ser345. Asp364, Asp366, and Asp372 together coordinate Ca(2+).

This sequence belongs to the synaptotagmin family. Homotetramer. Heterodimer; heterodimerizes with SYT2 in presence of calcium. Interacts with SCAMP5. Interacts with STON2. Forms a complex with SV2B, syntaxin 1 and SNAP25. Interacts with SV2A, SV2B and SV2C. Interacts with RIMS1. Interacts with PRRT2. Interacts with DNAJC5 in a phosphorylation-dependent manner. Interacts (via N-terminus) with RAB3A. Interacts with SYT12. Interacts with calmodulin. Interacts with DNM1 (via C-terminal proline-rich domain (PRD)); this interaction facilitates vesicle fission during clathrin-mediated endocytosis (CME). Ca(2+) serves as cofactor. In terms of processing, glycosylated.

The protein localises to the cytoplasmic vesicle. It localises to the secretory vesicle membrane. It is found in the secretory vesicle. The protein resides in the synaptic vesicle membrane. Its subcellular location is the chromaffin granule membrane. The protein localises to the cytoplasm. Functionally, calcium sensor that participates in triggering neurotransmitter release at the synapse. May have a regulatory role in the membrane interactions during trafficking of synaptic vesicles at the active zone of the synapse. It binds acidic phospholipids with a specificity that requires the presence of both an acidic head group and a diacyl backbone. A Ca(2+)-dependent interaction between synaptotagmin and putative receptors for activated protein kinase C has also been reported. It can bind to at least three additional proteins in a Ca(2+)-independent manner; these are neurexins, syntaxin and AP2. Plays a role in dendrite formation by melanocytes. This chain is Synaptotagmin-1, found in Bos taurus (Bovine).